We begin with the raw amino-acid sequence, 303 residues long: MSEPQPDLEPPQHGLYMLFLLVLVFFLMGLVGFMICHVLKKKGYRCRTSRGSEPDDAQLQPPEDDDVNEDTVERIVRCIIQNEANAEALKEMLGDSEGEGTVQLSSVDATSSLQDGAPSHHHTVHLGSAAPCIHCSRSKRPPLVRQGRSKEGKSRPRPGETTVFSVGRFRVTHIEKRYGLHEHRDGSPTDRSWGSGGGQEPGGSQAAGGGQPRTGTAAIERLLPEPPPSQAAATHSVQNGRLQDASLVPCTLEGTPGTSAELNLGPRGRDPSPGLSSQEANGQPTKLDTSGQQESLPPEAGGM.

Residues Leu-15–Ile-35 traverse the membrane as a helical segment. 3 disordered regions span residues Arg-47–Asn-68, Cys-135–Thr-214, and Pro-249–Met-303. Ser-52 is subject to Phosphoserine. Basic and acidic residues-rich tracts occupy residues Arg-148 to Pro-158 and Thr-172 to Pro-188. The span at Gly-194–Pro-212 shows a compositional bias: gly residues. Residues Gly-274 to Ser-295 show a composition bias toward polar residues.

The protein belongs to the RELT family. In terms of assembly, interacts with RELT, RELL1, OXSR1, PLSCR1 and TRAF2.

It is found in the cell membrane. In terms of biological role, induces activation of MAPK14/p38 cascade, when overexpressed. Induces apoptosis, when overexpressed. This Mus musculus (Mouse) protein is RELT-like protein 2 (Rell2).